We begin with the raw amino-acid sequence, 2471 residues long: Histidine protein kinase 1 (2471 aa).

Residues Met-1 to Glu-10 are compositionally biased toward polar residues. Disordered regions lie at residues Met-1–Tyr-30, Glu-52–Ser-75, and Arg-395–Gly-415. The segment covering Pro-11–Tyr-30 has biased composition (basic and acidic residues). The 279-residue stretch at Glu-358–Ile-636 folds into the Protein kinase domain. Positions Asn-2004 to Ala-2225 constitute a Histidine kinase domain. Residue His-2007 is modified to Phosphohistidine; by autocatalysis. One can recognise a Response regulatory domain in the interval Arg-2340 to Gly-2466. Asp-2394 carries the post-translational modification 4-aspartylphosphate.

The phosphorelay mechanism involves the sequential transfer of a phosphate group from His-2007 (H1) in the histidine kinase domain (transmitter domain) to Asp-2394 (D1) of the response regulatory domain (receiver domain). This transfer probably occurs between two CHK1 molecules, rather than intramolecularly.

The enzyme catalyses ATP + protein L-histidine = ADP + protein N-phospho-L-histidine.. Histidine kinase involved in a two-component signaling pathway that regulates cell wall mannan and glucan biosynthesis. Regulates quorum sensing as well as hyphal formation, biofilm formation, chlamidospore formation, and virulence. Plays a prominent role in phagocyte activation. Involved in the covering of the most potent pro-inflammatory cell wall molecules, the beta-glucans, underneath a dense mannan layer, so that the pathogen becomes partly invisible for immune cells such as phagocytes. This Candida albicans (strain SC5314 / ATCC MYA-2876) (Yeast) protein is Histidine protein kinase 1 (CHK1).